A 103-amino-acid polypeptide reads, in one-letter code: MYAVIKTGGKQYRVASGEKIKVEQIAADVGQEIVIDQVLAVGNGAELKVGTPLVSGATVTATVVAHGKHDKVRIFKMRRRKHYQKRQGHRQQFTELQIGAIAA.

It belongs to the bacterial ribosomal protein bL21 family. Part of the 50S ribosomal subunit. Contacts protein L20.

Its function is as follows. This protein binds to 23S rRNA in the presence of protein L20. In Paracidovorax citrulli (strain AAC00-1) (Acidovorax citrulli), this protein is Large ribosomal subunit protein bL21.